Consider the following 447-residue polypeptide: Glutamate--tRNA ligase 1 (447 aa).

Positions 10–20 match the 'HIGH' region motif; the sequence is PSPTGMLHVGN. Residues 240 to 244 carry the 'KMSKS' region motif; the sequence is KISKR. ATP is bound at residue Lys-243.

Belongs to the class-I aminoacyl-tRNA synthetase family. Glutamate--tRNA ligase type 1 subfamily. Monomer.

It is found in the cytoplasm. It carries out the reaction tRNA(Glu) + L-glutamate + ATP = L-glutamyl-tRNA(Glu) + AMP + diphosphate. Functionally, catalyzes the attachment of glutamate to tRNA(Glu) in a two-step reaction: glutamate is first activated by ATP to form Glu-AMP and then transferred to the acceptor end of tRNA(Glu). The sequence is that of Glutamate--tRNA ligase 1 from Rickettsia massiliae (strain Mtu5).